A 340-amino-acid chain; its full sequence is MIIRFILSFFTSLLLMLIFGPHLINWLNKYKIQQIIRNFGPKSHFNKKNTPTMGGILIIFSIIISTIIWTKLSNPYVWLTLTILIGYGIIGFIDDNMKIYYKNSKGLSSLHKFSLLSILACIIIFLIYYIINDHSTIKLIVPFSKNIIFNTKMICILISYFAIIGTSNAVNLTDGLDGLAIVPIIFVTTNLSIISFISGNVNLSYYFNTIYIPYSNELTIICAAIIGSSLGFLWFNTYPAQIFMGDVGSLSLGGTIGIISVLLRQEILLIIVGGLFVIETLSVIIQVLYYKITKKKLFKMTPIHHHYELNGCPETRLIIRFWIISFILMLLGLLMLKVHQ.

10 helical membrane passes run Phe5–Asn25, Thr50–Thr70, Ser73–Ile93, Phe113–Asp133, Ile147–Ser167, Gly178–Ser198, Leu218–Tyr238, Ile242–Leu262, Ile267–Val287, and Ile318–Val338.

Belongs to the glycosyltransferase 4 family. MraY subfamily. Requires Mg(2+) as cofactor.

Its subcellular location is the cell membrane. It catalyses the reaction UDP-N-acetyl-alpha-D-muramoyl-L-alanyl-gamma-D-glutamyl-meso-2,6-diaminopimeloyl-D-alanyl-D-alanine + di-trans,octa-cis-undecaprenyl phosphate = di-trans,octa-cis-undecaprenyl diphospho-N-acetyl-alpha-D-muramoyl-L-alanyl-D-glutamyl-meso-2,6-diaminopimeloyl-D-alanyl-D-alanine + UMP. The protein operates within cell wall biogenesis; peptidoglycan biosynthesis. Functionally, catalyzes the initial step of the lipid cycle reactions in the biosynthesis of the cell wall peptidoglycan: transfers peptidoglycan precursor phospho-MurNAc-pentapeptide from UDP-MurNAc-pentapeptide onto the lipid carrier undecaprenyl phosphate, yielding undecaprenyl-pyrophosphoryl-MurNAc-pentapeptide, known as lipid I. The polypeptide is Phospho-N-acetylmuramoyl-pentapeptide-transferase (Buchnera aphidicola subsp. Baizongia pistaciae (strain Bp)).